We begin with the raw amino-acid sequence, 381 residues long: 5-amino-6-(D-ribitylamino)uracil--L-tyrosine 4-hydroxyphenyl transferase (381 aa).

The Radical SAM core domain occupies 59–306 (VTYVVNRNIN…TAVARIFLGN (248 aa)). [4Fe-4S] cluster-binding residues include Cys73, Cys77, and Cys80.

The protein belongs to the radical SAM superfamily. CofH family. As to quaternary structure, consists of two subunits, CofG and CofH. It depends on [4Fe-4S] cluster as a cofactor.

The catalysed reaction is 5-amino-6-(D-ribitylamino)uracil + L-tyrosine + S-adenosyl-L-methionine = 5-amino-5-(4-hydroxybenzyl)-6-(D-ribitylimino)-5,6-dihydrouracil + 2-iminoacetate + 5'-deoxyadenosine + L-methionine + H(+). The protein operates within cofactor biosynthesis; coenzyme F0 biosynthesis. Its function is as follows. Catalyzes the radical-mediated synthesis of 5-amino-5-(4-hydroxybenzyl)-6-(D-ribitylimino)-5,6-dihydrouracil from 5-amino-6-(D-ribitylamino)uracil and L-tyrosine. This is 5-amino-6-(D-ribitylamino)uracil--L-tyrosine 4-hydroxyphenyl transferase from Cyanothece sp. (strain PCC 7425 / ATCC 29141).